The chain runs to 445 residues: GTPase Der (445 aa).

2 consecutive EngA-type G domains span residues 3–166 (PVIA…AERV) and 180–353 (IRIG…ESCY). GTP is bound by residues 9 to 16 (GRPNVGKS), 56 to 60 (DTGGI), 118 to 121 (NKTD), 186 to 193 (GRPNVGKS), 233 to 237 (DTAGI), and 298 to 301 (NKWD). A KH-like domain is found at 354 to 438 (AKWTTNRLTR…PIIFEFKSAE (85 aa)).

Belongs to the TRAFAC class TrmE-Era-EngA-EngB-Septin-like GTPase superfamily. EngA (Der) GTPase family. In terms of assembly, associates with the 50S ribosomal subunit.

GTPase that plays an essential role in the late steps of ribosome biogenesis. This chain is GTPase Der, found in Marinomonas sp. (strain MWYL1).